The primary structure comprises 251 residues: 1-(5-phosphoribosyl)-5-[(5-phosphoribosylamino)methylideneamino] imidazole-4-carboxamide isomerase (251 aa).

The active-site Proton acceptor is the Asp8. Residue Asp131 is the Proton donor of the active site.

It belongs to the HisA/HisF family.

It is found in the cytoplasm. The catalysed reaction is 1-(5-phospho-beta-D-ribosyl)-5-[(5-phospho-beta-D-ribosylamino)methylideneamino]imidazole-4-carboxamide = 5-[(5-phospho-1-deoxy-D-ribulos-1-ylimino)methylamino]-1-(5-phospho-beta-D-ribosyl)imidazole-4-carboxamide. It participates in amino-acid biosynthesis; L-histidine biosynthesis; L-histidine from 5-phospho-alpha-D-ribose 1-diphosphate: step 4/9. The sequence is that of 1-(5-phosphoribosyl)-5-[(5-phosphoribosylamino)methylideneamino] imidazole-4-carboxamide isomerase from Thiobacillus denitrificans (strain ATCC 25259 / T1).